We begin with the raw amino-acid sequence, 311 residues long: Probable manganese-dependent inorganic pyrophosphatase (311 aa).

Positions 9, 13, 15, 77, 99, and 151 each coordinate Mn(2+).

The protein belongs to the PPase class C family. It depends on Mn(2+) as a cofactor.

It is found in the cytoplasm. The catalysed reaction is diphosphate + H2O = 2 phosphate + H(+). The protein is Probable manganese-dependent inorganic pyrophosphatase of Streptococcus sanguinis (strain SK36).